Consider the following 430-residue polypeptide: Phosphomethylpyrimidine synthase (430 aa).

Substrate contacts are provided by residues Asn-67, Met-96, Tyr-125, His-161, 183 to 185, 224 to 227, and Glu-263; these read SRG and DALR. Zn(2+) is bound at residue His-267. Tyr-290 contacts substrate. His-331 contributes to the Zn(2+) binding site. [4Fe-4S] cluster-binding residues include Cys-406, Cys-409, and Cys-413.

The protein belongs to the ThiC family. In terms of assembly, homodimer. It depends on [4Fe-4S] cluster as a cofactor.

It carries out the reaction 5-amino-1-(5-phospho-beta-D-ribosyl)imidazole + S-adenosyl-L-methionine = 4-amino-2-methyl-5-(phosphooxymethyl)pyrimidine + CO + 5'-deoxyadenosine + formate + L-methionine + 3 H(+). It participates in cofactor biosynthesis; thiamine diphosphate biosynthesis. In terms of biological role, catalyzes the synthesis of the hydroxymethylpyrimidine phosphate (HMP-P) moiety of thiamine from aminoimidazole ribotide (AIR) in a radical S-adenosyl-L-methionine (SAM)-dependent reaction. This is Phosphomethylpyrimidine synthase from Campylobacter jejuni subsp. doylei (strain ATCC BAA-1458 / RM4099 / 269.97).